Consider the following 686-residue polypeptide: Chondroitin proteoglycan 1 (686 aa).

The signal sequence occupies residues 1–18; sequence MLPKSVLIVAFLVASSSA. Residue Asn-46 is glycosylated (N-linked (GlcNAc...) asparagine). One can recognise a Chitin-binding type-2 1 domain in the interval 63 to 120; it reads DTDCSTKEDGLYAIGGCSPQFLTCSGGIARIMDCPANLIYDQRIIACEYSYNVPECSG. Cysteines 96 and 109 form a disulfide. Asn-143 carries an N-linked (GlcNAc...) asparagine glycan. In terms of domain architecture, Chitin-binding type-2 2 spans 228-285; sequence DKTCNGKADGFYSFGQCSDHYIACSNGYTIPMQCPARLSFDEARVICDYTMNVPECQN. Cys-261 and Cys-274 form a disulfide bridge. The disordered stretch occupies residues 284–312; sequence QNGSGNYEGSAEETTTEASGELPYSNGYG. Residues Asn-285, Asn-635, and Asn-664 are each glycosylated (N-linked (GlcNAc...) asparagine). Residues 658–686 are disordered; it reads KLRSATNRTSTKEATTRTQNMHAHYHRNH.

Its function is as follows. Required for polar body extrusion during cytokinesis in embryo development. Affects cortical granule size. Shown to have roles in meiotic chromosome segregation, osmotic barrier function and polarization in conjunction with cpg-2. Binds chitin. This Caenorhabditis briggsae protein is Chondroitin proteoglycan 1 (cpg-1).